The following is a 134-amino-acid chain: DNA-binding protein H-NS homolog (134 aa).

The disordered stretch occupies residues His106–Ile134. Residues Gln112–Arg117 mediate DNA binding.

It belongs to the histone-like protein H-NS family. In terms of assembly, homodimer that oligomerizes on DNA into higher-order complexes that form bridges between disparate regions of DNA compacting it.

It is found in the cytoplasm. The protein localises to the nucleoid. Its function is as follows. A DNA-binding protein implicated in transcriptional repression and chromosome organization and compaction. Binds nucleation sites in AT-rich DNA and bridges them, forming higher-order nucleoprotein complexes and condensing the chromosome. As many horizontally transferred genes are AT-rich, it plays a central role in silencing foreign genes. A subset of genes are repressed by H-NS in association with other proteins. The sequence is that of DNA-binding protein H-NS homolog (hns) from Haemophilus influenzae (strain ATCC 51907 / DSM 11121 / KW20 / Rd).